Consider the following 154-residue polypeptide: Large ribosomal subunit protein uL24 (154 aa).

Residues 97 to 154 (EIAARKNLPPPEVPEETSNDTKESDENVTGADKEETNEIKEEDLNDNEDKNNDGSQEA) are disordered. Positions 115 to 135 (NDTKESDENVTGADKEETNEI) are enriched in basic and acidic residues.

Belongs to the universal ribosomal protein uL24 family. As to quaternary structure, part of the 50S ribosomal subunit.

One of two assembly initiator proteins, it binds directly to the 5'-end of the 23S rRNA, where it nucleates assembly of the 50S subunit. Functionally, located at the polypeptide exit tunnel on the outside of the subunit. In Picrophilus torridus (strain ATCC 700027 / DSM 9790 / JCM 10055 / NBRC 100828 / KAW 2/3), this protein is Large ribosomal subunit protein uL24.